The chain runs to 117 residues: UPF0102 protein Swoo_0351 (117 aa).

This sequence belongs to the UPF0102 family.

In Shewanella woodyi (strain ATCC 51908 / MS32), this protein is UPF0102 protein Swoo_0351.